A 233-amino-acid chain; its full sequence is Antiholin-like protein LrgB (233 aa).

6 helical membrane-spanning segments follow: residues 5 to 25 (LGIN…VIAT), 33 to 53 (GFFL…FLKL), 63 to 83 (IGGD…AIPL), 97 to 117 (IFGG…LVAI), 152 to 172 (LTSL…AKIV), and 212 to 232 (IAVV…APIL).

The protein belongs to the CidB/LrgB family. LrgB subfamily.

The protein resides in the cell membrane. In terms of biological role, inhibits the expression or activity of extracellular murein hydrolases by interacting, possibly with LrgA, with the holin-like proteins CidA and/or CidB. The LrgAB and CidAB proteins may affect the proton motive force of the membrane. May be involved in programmed cell death (PCD), possibly triggering PCD in response to antibiotics and environmental stresses. The polypeptide is Antiholin-like protein LrgB (Staphylococcus epidermidis (strain ATCC 12228 / FDA PCI 1200)).